We begin with the raw amino-acid sequence, 204 residues long: Recombination protein RecR (204 aa).

The segment at 63-78 (CRICCNVADSELCPIC) adopts a C4-type zinc-finger fold. Positions 86-181 (NKICVVEQPQ…KVTRLARGLP (96 aa)) constitute a Toprim domain.

The protein belongs to the RecR family.

In terms of biological role, may play a role in DNA repair. It seems to be involved in an RecBC-independent recombinational process of DNA repair. It may act with RecF and RecO. This chain is Recombination protein RecR, found in Dehalococcoides mccartyi (strain ATCC BAA-2100 / JCM 16839 / KCTC 5957 / BAV1).